A 367-amino-acid chain; its full sequence is MAYSTVQRVALASGLVLAVSLLLPKAFLSRGKRPEPPPGPEGKLDRFPPMMHHHSAPSDGQTPGARFQRSHLAEAFAKAKGAGGGAGGGGSGRGLMGQIIPIYGFGIFLYILYILFKLSKGKTAEDRNCSTAPPGNAHRKITNFELVQLQEKLKETEEAMEKLINRVGPNGESRAQAVTSDQEKRLLHQLREITRVMKEGKFIDTSPEKEAEEAPYMEDWEGYPEETYPIYDLSDGIKRRQETILVDYPDLKEPSAEEIAEQMGEIEEEGSERLSWDHLPTDPGAQKDNSVAPCDPKPESCSCCVHEEEDPAVLAENAGFSADGYSEQEEATKENLPQDFTNEGLGVSTDNAHVGGMLRKRNPQGFE.

An N-terminal signal peptide occupies residues 1 to 31 (MAYSTVQRVALASGLVLAVSLLLPKAFLSRG). Positions 30-67 (RGKRPEPPPGPEGKLDRFPPMMHHHSAPSDGQTPGARF) are disordered. Topologically, residues 32–95 (KRPEPPPGPE…AGGGGSGRGL (64 aa)) are lumenal. The chain crosses the membrane as a helical span at residues 96-116 (MGQIIPIYGFGIFLYILYILF). Over 117-367 (KLSKGKTAED…LRKRNPQGFE (251 aa)) the chain is Cytoplasmic. The stretch at 138 to 169 (HRKITNFELVQLQEKLKETEEAMEKLINRVGP) forms a coiled coil. Residue Lys-201 is modified to N6-acetyllysine; alternate. Residue Lys-201 forms a Glycyl lysine isopeptide (Lys-Gly) (interchain with G-Cter in ubiquitin); alternate linkage. Disordered regions lie at residues 262-301 (QMGE…PESC) and 322-367 (ADGY…QGFE). The segment covering 271–280 (SERLSWDHLP) has biased composition (basic and acidic residues). A compositionally biased stretch (basic residues) spans 358–367 (LRKRNPQGFE).

Belongs to the ric-3 family. As to quaternary structure, monomer and homodimer. Interacts with CHRNA7, CHRNA3, CHRNA4, CHRNB2, CHRNB4 and HTR3A. Expressed in brain, with highest levels in hippocampus, cerebellum and superior colliculus.

Its subcellular location is the endoplasmic reticulum membrane. Functionally, molecular chaperone which promotes the proper subunit assembly and surface trafficking of alpha-7 (CHRNA7) nicotinic acetylcholine receptor. Promotes the proper subunit assembly and cell surface expression of alpha-8 (CHRNA8) nicotinic acetylcholine receptor. May also promote functional expression of homomeric serotoninergic 5-HT3 receptors, and of heteromeric acetylcholine receptors alpha-3/beta-2, alpha-3/beta-4, alpha-4/beta-2 and alpha-4/beta-4. In Mus musculus (Mouse), this protein is Protein RIC-3 (Ric3).